Here is a 206-residue protein sequence, read N- to C-terminus: MTFEWWFAYLLTSTLLSLSPGSGAINTMTTSINHGYRGAVASIAGLQTGLGIHIVLVGVGLGTLFSRSLLAFEILKWAGAAYLIWLGIQQWRAAGAIDLHTLAQTQSRGRLFKRAIFVNLTNPKSIVFLAALFPQFIMPQQPQLAQYLILGVTTIVVDMVVMTGYATLAQRIAAWIKGPKQMKALNKAFGSLFMLVGALLASARHA.

A run of 6 helical transmembrane segments spans residues Trp-5–Ile-25, Gly-45–Phe-65, Ser-68–Ile-88, Phe-117–Ile-137, Leu-148–Leu-168, and Met-182–Ser-202.

This sequence belongs to the Rht family.

It localises to the cell membrane. Functionally, conducts the efflux of homoserine and homoserine lactone. This is Homoserine/homoserine lactone efflux protein (rhtB) from Salmonella typhimurium (strain LT2 / SGSC1412 / ATCC 700720).